The primary structure comprises 245 residues: Probable inactive carboxylesterase Os04g0669700 (245 aa).

Active-site charge relay system residues include serine 115 and histidine 201.

This sequence belongs to the AB hydrolase superfamily. AB hydrolase 2 family.

The chain is Probable inactive carboxylesterase Os04g0669700 from Oryza sativa subsp. japonica (Rice).